The primary structure comprises 349 residues: Probable dual-specificity RNA methyltransferase RlmN (349 aa).

Glu-93 serves as the catalytic Proton acceptor. Positions 99 to 329 constitute a Radical SAM core domain; it reads YKHGNTICVS…TTIRREMGSD (231 aa). An intrachain disulfide couples Cys-106 to Cys-334. Cys-113, Cys-117, and Cys-120 together coordinate [4Fe-4S] cluster. S-adenosyl-L-methionine contacts are provided by residues 160–161, Ser-192, 215–217, and Asn-291; these read GE and SLH. Cys-334 acts as the S-methylcysteine intermediate in catalysis.

The protein belongs to the radical SAM superfamily. RlmN family. [4Fe-4S] cluster is required as a cofactor.

The protein resides in the cytoplasm. It carries out the reaction adenosine(2503) in 23S rRNA + 2 reduced [2Fe-2S]-[ferredoxin] + 2 S-adenosyl-L-methionine = 2-methyladenosine(2503) in 23S rRNA + 5'-deoxyadenosine + L-methionine + 2 oxidized [2Fe-2S]-[ferredoxin] + S-adenosyl-L-homocysteine. It catalyses the reaction adenosine(37) in tRNA + 2 reduced [2Fe-2S]-[ferredoxin] + 2 S-adenosyl-L-methionine = 2-methyladenosine(37) in tRNA + 5'-deoxyadenosine + L-methionine + 2 oxidized [2Fe-2S]-[ferredoxin] + S-adenosyl-L-homocysteine. Specifically methylates position 2 of adenine 2503 in 23S rRNA and position 2 of adenine 37 in tRNAs. This chain is Probable dual-specificity RNA methyltransferase RlmN, found in Clostridium tetani (strain Massachusetts / E88).